The chain runs to 697 residues: Phenoloxidase 1 (697 aa).

Positions 1–101 (MSDMSGDVVE…PKHQEMATEV (101 aa)) are cleaved as a propeptide — removed by PPAE1. Residues H217, H221, and H247 each coordinate Cu cation. 2 N-linked (GlcNAc...) asparagine glycosylation sites follow: N260 and N313. E355 acts as the Proton acceptor in catalysis. Cu cation is bound by residues H370, H374, and H410. N-linked (GlcNAc...) asparagine glycans are attached at residues N498 and N552. Disulfide bonds link C587–C631 and C589–C638.

The protein belongs to the tyrosinase family. As to quaternary structure, heterodimer. Requires Cu(2+) as cofactor. Activated by the cleavage of the N-terminal propeptide by PPAE1. Expressed in hemocytes.

The protein resides in the secreted. It catalyses the reaction L-tyrosine + O2 = L-dopaquinone + H2O. The catalysed reaction is 2 L-dopa + O2 = 2 L-dopaquinone + 2 H2O. Activated by a cationic detergent cetyl pyridinium chloride (CPC). Inhibited by phenyl thio-urea (PTU). This is a copper-containing oxidase that functions in the formation of pigments such as melanins and other polyphenolic compounds. Catalyzes the rate-limiting conversions of tyrosine to DOPA, DOPA to DOPA-quinone and possibly 5,6 dihydroxyindole to indole-5'6 quinone. Catalyzes the oxidation of 4-methylcatechol. Binds to the surface of hemocytes and is involved in hemocyte melanization. This is Phenoloxidase 1 from Spodoptera litura (Asian cotton leafworm).